The following is an 808-amino-acid chain: Piwi-like protein 1 (808 aa).

Residues 214 to 333 (RINRVLNENN…IPGELCYLCG (120 aa)) enclose the PAZ domain. The disordered stretch occupies residues 300–322 (SMVRPKEKTENEPEGPTETDQSL). In terms of domain architecture, Piwi spans 492–790 (HMALVFIPDD…LAELVGKIHR (299 aa)).

The protein belongs to the argonaute family. Piwi subfamily. Expressed in dividing adult somatic stem cells (neoblasts).

This chain is Piwi-like protein 1 (wi-1), found in Schmidtea mediterranea (Freshwater planarian flatworm).